A 244-amino-acid chain; its full sequence is Transcriptional regulatory protein YpdB (244 aa).

Positions 2–116 (KVIIVEDEFL…RITGMLQKLE (115 aa)) constitute a Response regulatory domain. Residue Asp53 is modified to 4-aspartylphosphate. An HTH LytTR-type domain is found at 139–244 (INLVKDERII…VKEFRQLMHL (106 aa)).

Post-translationally, phosphorylated by YpdA.

It localises to the cytoplasm. Functionally, member of the two-component regulatory system YpdA/YpdB. YpdB regulates expression of yhjX by binding to its promoter region. The sequence is that of Transcriptional regulatory protein YpdB (ypdB) from Escherichia coli O157:H7.